Consider the following 954-residue polypeptide: Kinesin-like protein KIN-14Q (954 aa).

The Calponin-homology (CH) domain maps to alanine 33–glutamate 155. A Kinesin motor domain is found at asparagine 374–valine 699. Glycine 457–threonine 464 lines the ATP pocket. Residues alanine 704–glutamate 733 are a coiled coil. Over residues tyrosine 844–proline 855 the composition is skewed to basic and acidic residues. Disordered regions lie at residues tyrosine 844–methionine 876 and proline 912–lysine 954. Over residues phenylalanine 864 to aspartate 873 the composition is skewed to low complexity. Residues proline 928–lysine 954 are compositionally biased toward polar residues.

This sequence belongs to the TRAFAC class myosin-kinesin ATPase superfamily. Kinesin family. KIN-14 subfamily. As to quaternary structure, forms oligomers in vitro. Interacts with actin microfilaments. Binds to actin in vitro through its calponin-homology (CH) domain. In terms of tissue distribution, expressed in primary leaf, primary root, developing flower and coleoptile.

It localises to the cytoplasm. It is found in the cytoskeleton. With respect to regulation, the microtubule-dependent ATPase activity is regulated by actin binding. In terms of biological role, minus end-directed motor protein that transports actin filaments along microtubules. Plays a central role in the polar orientation of actin filaments along microtubules, and thus a contribution to the organization of the cytoskeletal architecture. Links the actin microfilaments with the cortical microtubules in both cycling and non-cycling cells. Required for efficient cell elongation by its participation in the premitotic nuclear positioning. The sequence is that of Kinesin-like protein KIN-14Q from Oryza sativa subsp. japonica (Rice).